The sequence spans 504 residues: 2,3-bisphosphoglycerate-independent phosphoglycerate mutase (504 aa).

D11 and S61 together coordinate Mn(2+). S61 (phosphoserine intermediate) is an active-site residue. Substrate-binding positions include H122, 152–153 (RD), R183, R189, 255–258 (RNDR), and K329. Mn(2+)-binding residues include D396, H400, D437, H438, and H455.

The protein belongs to the BPG-independent phosphoglycerate mutase family. In terms of assembly, monomer. The cofactor is Mn(2+).

The enzyme catalyses (2R)-2-phosphoglycerate = (2R)-3-phosphoglycerate. It functions in the pathway carbohydrate degradation; glycolysis; pyruvate from D-glyceraldehyde 3-phosphate: step 3/5. Its function is as follows. Catalyzes the interconversion of 2-phosphoglycerate and 3-phosphoglycerate. This is 2,3-bisphosphoglycerate-independent phosphoglycerate mutase from Bacteroides fragilis (strain ATCC 25285 / DSM 2151 / CCUG 4856 / JCM 11019 / LMG 10263 / NCTC 9343 / Onslow / VPI 2553 / EN-2).